A 126-amino-acid chain; its full sequence is Small ribosomal subunit protein uS13 (126 aa).

A disordered region spans residues 98–126; the sequence is VRGQSTKNNARTRKGKRKTVANKKKAAKK. Basic residues predominate over residues 107–126; sequence ARTRKGKRKTVANKKKAAKK.

Belongs to the universal ribosomal protein uS13 family. In terms of assembly, part of the 30S ribosomal subunit. Forms a loose heterodimer with protein S19. Forms two bridges to the 50S subunit in the 70S ribosome.

Its function is as follows. Located at the top of the head of the 30S subunit, it contacts several helices of the 16S rRNA. In the 70S ribosome it contacts the 23S rRNA (bridge B1a) and protein L5 of the 50S subunit (bridge B1b), connecting the 2 subunits; these bridges are implicated in subunit movement. Contacts the tRNAs in the A and P-sites. The sequence is that of Small ribosomal subunit protein uS13 from Amoebophilus asiaticus (strain 5a2).